We begin with the raw amino-acid sequence, 744 residues long: Polyribonucleotide nucleotidyltransferase (744 aa).

The Mg(2+) site is built by Asp515 and Asp521. The region spanning 581–640 (PRVITVQVPVDKIGEVIGPKGKMINQIQDDTGADISIEDDGTVFIGATDGPSAEAARQAI) is the KH domain. Residues 652–724 (GERFVGTVVK…PRGKLSLHAV (73 aa)) enclose the S1 motif domain.

It belongs to the polyribonucleotide nucleotidyltransferase family. It depends on Mg(2+) as a cofactor.

Its subcellular location is the cytoplasm. The enzyme catalyses RNA(n+1) + phosphate = RNA(n) + a ribonucleoside 5'-diphosphate. Functionally, involved in mRNA degradation. Catalyzes the phosphorolysis of single-stranded polyribonucleotides processively in the 3'- to 5'-direction. The polypeptide is Polyribonucleotide nucleotidyltransferase (Beutenbergia cavernae (strain ATCC BAA-8 / DSM 12333 / CCUG 43141 / JCM 11478 / NBRC 16432 / NCIMB 13614 / HKI 0122)).